Reading from the N-terminus, the 1543-residue chain is ATP-binding cassette sub-family A member 10 (1543 aa).

7 consecutive transmembrane segments (helical) span residues 83-103 (YWLKGFVAFQAAINAAIIEVT), 135-155 (WFHFTCLVSFSSFIYFASLNV), 185-205 (ICFIFIMSIFMALVITSIPIV), 210-230 (FMVIFTLYSLYGLSLIALAFL), 240-260 (LAGLAGFLFTVFWGCLGFTVL), 264-284 (LPLSLGWVLSLLSPFAFTAGM), and 310-330 (IATFFILAFDTLFYLIFTLYF). An ABC transporter 1 domain is found at 391–626 (IRIRNVIKEY…WGIGYHLSLH (236 aa)). 427–434 (GHNGAGKS) lines the ATP pocket. The next 8 helical transmembrane spans lie at 774 to 794 (LLCLLLVLGIAFIPIILEKIM), 890 to 910 (LNCFPVLMGIVSNALMGIFNF), 926 to 946 (IVLDLGFIDGSIFLLLITNCV), 985 to 1005 (IPLYFLILFSIHLIYYFIFLG), 1014 to 1034 (FVLVVCIIGCAVSLIFLTYVL), 1046 to 1066 (GFWSFGFFIILICVSTIMVST), 1073 to 1093 (LILCMIFIPSFTLLGYVMLLI), and 1113 to 1133 (KTILLTTLIPYLQSVIFLFVI). The segment covering 1153 to 1164 (ISPRSRETHPNP) has biased composition (basic and acidic residues). Residues 1153–1177 (ISPRSRETHPNPEEPEEEDEDVQAE) are disordered. Residues 1165 to 1174 (EEPEEEDEDV) are compositionally biased toward acidic residues. Residues 1206–1440 (YETKKSCFST…FGRDYLLEIK (235 aa)) enclose the ABC transporter 2 domain. 1239–1246 (GHNGAGKS) contacts ATP.

It belongs to the ABC transporter superfamily. ABCA family. As to expression, widely expressed. Highly expressed in skeletal muscle, heart, brain and gastrointestinal tract.

The protein localises to the membrane. In terms of biological role, probable transporter which may play a role in macrophage lipid transport and homeostasis. The polypeptide is ATP-binding cassette sub-family A member 10 (ABCA10) (Homo sapiens (Human)).